Reading from the N-terminus, the 311-residue chain is Trem-like transcript 1 protein (311 aa).

Residues 1 to 15 form the signal peptide; sequence MGLTLLLLLLLGLEG. One can recognise an Ig-like V-type domain in the interval 16 to 121; it reads QGIVGSLPEV…PQILHRVSLN (106 aa). Over 16 to 162 the chain is Extracellular; sequence QGIVGSLPEV…EPSQDEKSIP (147 aa). 2 disulfide bridges follow: Cys-38-Cys-104 and Cys-52-Cys-59. The chain crosses the membrane as a helical span at residues 163 to 183; sequence LIWGAVLLVGLLVAAVVLFAV. Over 184–311 the chain is Cytoplasmic; it reads MAKRKQGNRL…NPPNNQTPSS (128 aa). Residue Cys-196 is the site of S-palmitoyl cysteine attachment. The segment at 229 to 263 is disordered; it reads VPHIRLDSPPSFDNTTYTSLPLDSPSGKPSLPAPS. Residues 239–249 show a composition bias toward polar residues; the sequence is SFDNTTYTSLP. The ITIM motif lies at 279–284; the sequence is VTYATV. The tract at residues 287–311 is disordered; the sequence is PGGNKGGGTSCGPAQNPPNNQTPSS.

In terms of assembly, when phosphorylated, interacts with PTPN6. When phosphorylated, interacts with PTPN11. Phosphorylated on tyrosine residues. As to expression, detected in platelets, monocytic leukemia and in T-cell leukemia.

The protein localises to the cell membrane. It localises to the cytoplasm. In terms of biological role, cell surface receptor that may play a role in the innate and adaptive immune response. This Homo sapiens (Human) protein is Trem-like transcript 1 protein (TREML1).